Here is a 360-residue protein sequence, read N- to C-terminus: POU domain, class 5, transcription factor 1 (360 aa).

2 disordered regions span residues 1-52 (MAGH…PGVG) and 88-114 (GGLE…SPEP). Residues 4 to 12 (HLASDFAFS) carry the 9aaTAD motif. Ser-111 is subject to Phosphoserine; by MAPK. A Glycyl lysine isopeptide (Lys-Gly) (interchain with G-Cter in SUMO) cross-link involves residue Lys-123. In terms of domain architecture, POU-specific spans 138–212 (DIKALQKELE…LLQKWVEEAD (75 aa)). 2 residues coordinate DNA: Arg-157 and Gln-164. DNA-binding stretches follow at residues 180-186 (SQTTICR) and 193-196 (SFKN). Residues 230-289 (RKRKRTSIENRVRGNLENLFLQCPKPTLQQISHIAQQLGLEKDVVRVWFCNRRQKGKRSS) constitute a DNA-binding region (homeobox). A Phosphothreonine modification is found at Thr-235. Residues Ser-236, Ser-289, Ser-290, and Ser-355 each carry the phosphoserine modification.

The protein belongs to the POU transcription factor family. Class-5 subfamily. As to quaternary structure, interacts with PKM. Interacts with WWP2. Interacts with UBE2I and ZSCAN10. Interacts with PCGF1. Interacts with ESRRB; recruits ESRRB near the POU5F1-SOX2 element in the NANOG proximal promoter; the interaction is DNA independent. Interacts with ZNF322. Interacts with MAPK8 and MAPK9; the interaction allows MAPK8 and MAPK9 to phosphorylate POU5F1 on Ser-355. Interacts (when phosphorylated on Ser-355) with FBXW8. Interacts with FBXW4. Interacts with SOX2 and SOX15; binds synergistically with either SOX2 or SOX15 to DNA. Interacts with DDX56. Post-translationally, sumoylation enhances the protein stability, DNA binding and transactivation activity. Sumoylation is required for enhanced YES1 expression. In terms of processing, ubiquitinated; undergoes 'Lys-63'-linked polyubiquitination by WWP2 leading to proteasomal degradation. ERK1/2-mediated phosphorylation at Ser-111 promotes nuclear exclusion and proteasomal degradation. Phosphorylation at Thr-235 and Ser-236 decrease DNA-binding and alters ability to activate transcription. In terms of tissue distribution, expressed in developing brain. Highest levels found in specific cell layers of the cortex, the olfactory bulb, the hippocampus and the cerebellum. Low levels of expression in adult tissues.

The protein localises to the cytoplasm. Its subcellular location is the nucleus. Functionally, transcription factor that binds to the octamer motif (5'-ATTTGCAT-3'). Forms a trimeric complex with SOX2 or SOX15 on DNA and controls the expression of a number of genes involved in embryonic development such as YES1, FGF4, UTF1 and ZFP206. Critical for early embryogenesis and for embryonic stem cell pluripotency. This Homo sapiens (Human) protein is POU domain, class 5, transcription factor 1 (POU5F1).